We begin with the raw amino-acid sequence, 869 residues long: Eukaryotic translation initiation factor 3 subunit C (869 aa).

Disordered regions lie at residues 1–92 (MSRF…KSAK) and 182–242 (IKKA…VGKG). Residues 14-55 (SSDEEEDLYSDDEEVQEQPEEESSEDDSEEDDDDDDDSDSSS) show a composition bias toward acidic residues. The segment covering 185 to 203 (ASKEHQKDIDSFRADKDAY) has biased composition (basic and acidic residues). The region spanning 607-781 (FHMHINLELL…SSIIFRKGVE (175 aa)) is the PCI domain. Positions 803–869 (NERTLETRTQ…ALGAAVGSRA (67 aa)) are disordered. The span at 823 to 843 (GRGGRGGNRGGRGGGRGGRGG) shows a compositional bias: gly residues.

The protein belongs to the eIF-3 subunit C family. In terms of assembly, component of the eukaryotic translation initiation factor 3 (eIF-3) complex.

The protein resides in the cytoplasm. Component of the eukaryotic translation initiation factor 3 (eIF-3) complex, which is involved in protein synthesis of a specialized repertoire of mRNAs and, together with other initiation factors, stimulates binding of mRNA and methionyl-tRNAi to the 40S ribosome. The eIF-3 complex specifically targets and initiates translation of a subset of mRNAs involved in cell proliferation. The chain is Eukaryotic translation initiation factor 3 subunit C (nip1) from Botryotinia fuckeliana (strain B05.10) (Noble rot fungus).